The primary structure comprises 507 residues: Probable DNA ligase (507 aa).

E209 provides a ligand contact to ATP. Catalysis depends on K211, which acts as the N6-AMP-lysine intermediate. R216, R231, E260, F300, R372, and K378 together coordinate ATP.

This sequence belongs to the ATP-dependent DNA ligase family. The cofactor is Mg(2+).

It carries out the reaction ATP + (deoxyribonucleotide)n-3'-hydroxyl + 5'-phospho-(deoxyribonucleotide)m = (deoxyribonucleotide)n+m + AMP + diphosphate.. In terms of biological role, DNA ligase that seals nicks in double-stranded DNA during DNA replication, DNA recombination and DNA repair. This chain is Probable DNA ligase, found in Mycobacterium bovis (strain ATCC BAA-935 / AF2122/97).